A 463-amino-acid chain; its full sequence is MRADWIAKRRGQANVSQMHYARSGVVTEEMAFVAARERLEPELVRAEVARGRMVIPANVRHPELEPLAIGITACCKINANIGNSAVTSNIDEELAKLRVCLKYGADTVMDLSTGGDIPQIREAILRASPIPVGTVPIYECLAHVKDVADLTPELMLEIIEAQAAQGVDYMTIHAGVLRDFIPLAAHRITGIVSRGGALMAQWMLANKAENPFFTHFEQICEIFKRYDVTFSLGDGLRPGCLADASDAAQFAELKALGDLTRKAWEHGVQVMVEGPGHVPLDQIPMNMEKERELCSEAPFYVLGPLVTDIAPGYDHITSAIGAAVAAQHGAAMLCYVTPAEHLGLPDIDDVREGIVAYKIAAHAADVARHRPGARDRDDALSRARYAFDWNKQFELSLDPDTARAKHDETLPHEAFKSAEFCSMCGPKFCSMKIHGHLAEAAAAQDAAANGAAGKPAGGLQVLP.

Residues asparagine 80, methionine 109, tyrosine 138, histidine 173, 193–195 (SRG), 234–237 (DGLR), and glutamate 273 contribute to the substrate site. Histidine 277 is a Zn(2+) binding site. Substrate is bound at residue tyrosine 300. Residue histidine 341 coordinates Zn(2+). 3 residues coordinate [4Fe-4S] cluster: cysteine 421, cysteine 424, and cysteine 429.

Belongs to the ThiC family. In terms of assembly, homodimer. [4Fe-4S] cluster serves as cofactor.

The enzyme catalyses 5-amino-1-(5-phospho-beta-D-ribosyl)imidazole + S-adenosyl-L-methionine = 4-amino-2-methyl-5-(phosphooxymethyl)pyrimidine + CO + 5'-deoxyadenosine + formate + L-methionine + 3 H(+). It participates in cofactor biosynthesis; thiamine diphosphate biosynthesis. In terms of biological role, catalyzes the synthesis of the hydroxymethylpyrimidine phosphate (HMP-P) moiety of thiamine from aminoimidazole ribotide (AIR) in a radical S-adenosyl-L-methionine (SAM)-dependent reaction. The sequence is that of Phosphomethylpyrimidine synthase from Anaeromyxobacter sp. (strain K).